The primary structure comprises 761 residues: 1,2-alpha-glucosylglycerol phosphorylase (761 aa).

327 to 328 (YQ) contacts glycerol. 333–334 (WD) serves as a coordination point for substrate. The Proton donor role is filled by Glu475. 587 to 588 (KQ) is a substrate binding site.

Belongs to the glycosyl hydrolase 65 family. In terms of assembly, homodimer.

It carries out the reaction 2-O-(alpha-D-glucopyranosyl)glycerol + phosphate = beta-D-glucose 1-phosphate + glycerol. In terms of biological role, catalyzes both the (1) reversible phosphorolysis of 2-O-alpha-D-glucopyranosyl-sn-glycerol (GG) from beta-D-glucose 1-phosphate (betaGlc1P) and glycerol and (2) the hydrolysis of betaGlc1P. the betaGlc1P hydrolysis is a glucosyl-transfer reaction to an acceptor water molecule that produces an anomer-inverted alpha-glucose, not a phosphatase-type reaction. In the absence of glycerol produces alpha-D-glucopyranose and phosphate from beta-D-glucopyranose 1-phosphate. The polypeptide is 1,2-alpha-glucosylglycerol phosphorylase (Bacillus selenitireducens (strain ATCC 700615 / DSM 15326 / MLS10)).